The sequence spans 270 residues: Bis(5'-nucleosyl)-tetraphosphatase, symmetrical (270 aa).

It belongs to the Ap4A hydrolase family.

It carries out the reaction P(1),P(4)-bis(5'-adenosyl) tetraphosphate + H2O = 2 ADP + 2 H(+). Hydrolyzes diadenosine 5',5'''-P1,P4-tetraphosphate to yield ADP. The chain is Bis(5'-nucleosyl)-tetraphosphatase, symmetrical from Haemophilus ducreyi (strain 35000HP / ATCC 700724).